Consider the following 333-residue polypeptide: Adenosine deaminase (333 aa).

Zn(2+)-binding residues include His12 and His14. Substrate contacts are provided by His14, Asp16, and Gly170. His197 lines the Zn(2+) pocket. Residue Glu200 is the Proton donor of the active site. Asp278 contributes to the Zn(2+) binding site. A substrate-binding site is contributed by Asp279.

Belongs to the metallo-dependent hydrolases superfamily. Adenosine and AMP deaminases family. Adenosine deaminase subfamily. Zn(2+) is required as a cofactor.

The catalysed reaction is adenosine + H2O + H(+) = inosine + NH4(+). It catalyses the reaction 2'-deoxyadenosine + H2O + H(+) = 2'-deoxyinosine + NH4(+). Functionally, catalyzes the hydrolytic deamination of adenosine and 2-deoxyadenosine. The chain is Adenosine deaminase from Escherichia coli O139:H28 (strain E24377A / ETEC).